A 520-amino-acid chain; its full sequence is Cytochrome P450 716A67 (520 aa).

A helical transmembrane segment spans residues 4–24; sequence SLAIYYGIILITVTLGLVYTW. Cys-466 serves as a coordination point for heme.

The protein belongs to the cytochrome P450 family. Heme serves as cofactor.

It is found in the membrane. Functionally, catalyzes hydroxylation at the C-2 position of different intermediates of the hemolytic sapogenin biosynthetic pathway downstream of oleanolic acid synthesis. The chain is Cytochrome P450 716A67 from Medicago truncatula (Barrel medic).